Reading from the N-terminus, the 104-residue chain is MMRGMGNMQGMMKQVQKMQKEMAKAQEALNEKEFIGEATNQLVTATFTGDRTMKDLIIKEDVVDPEDVDMLQDLVIMAVNDALVKIEKETEATLGKYTKGMPGF.

Belongs to the YbaB/EbfC family. As to quaternary structure, homodimer.

The protein resides in the cytoplasm. It is found in the nucleoid. Binds to DNA and alters its conformation. May be involved in regulation of gene expression, nucleoid organization and DNA protection. In Enterococcus faecalis (strain ATCC 700802 / V583), this protein is Nucleoid-associated protein EF_2780.